Here is a 410-residue protein sequence, read N- to C-terminus: Arginine deiminase (410 aa).

The Amidino-cysteine intermediate role is filled by Cys-399.

It belongs to the arginine deiminase family.

The protein localises to the cytoplasm. The enzyme catalyses L-arginine + H2O = L-citrulline + NH4(+). It participates in amino-acid degradation; L-arginine degradation via ADI pathway; carbamoyl phosphate from L-arginine: step 1/2. In Treponema denticola (strain ATCC 35405 / DSM 14222 / CIP 103919 / JCM 8153 / KCTC 15104), this protein is Arginine deiminase.